Reading from the N-terminus, the 334-residue chain is Holliday junction branch migration complex subunit RuvB (334 aa).

Residues 4-184 (ADRLIQPQLQ…FGIPLRLEFY (181 aa)) are large ATPase domain (RuvB-L). ATP-binding positions include Arg24, Gly65, Lys68, Thr69, Thr70, 131–133 (EDY), Arg174, Tyr184, and Arg221. Thr69 contributes to the Mg(2+) binding site. The small ATPAse domain (RuvB-S) stretch occupies residues 185–255 (NVKDLSTIVT…VAELALNLLD (71 aa)). The segment at 258–334 (GEGFDYMDRK…YVHFGMIKPE (77 aa)) is head domain (RuvB-H). Positions 294, 313, and 318 each coordinate DNA.

This sequence belongs to the RuvB family. Homohexamer. Forms an RuvA(8)-RuvB(12)-Holliday junction (HJ) complex. HJ DNA is sandwiched between 2 RuvA tetramers; dsDNA enters through RuvA and exits via RuvB. An RuvB hexamer assembles on each DNA strand where it exits the tetramer. Each RuvB hexamer is contacted by two RuvA subunits (via domain III) on 2 adjacent RuvB subunits; this complex drives branch migration. In the full resolvosome a probable DNA-RuvA(4)-RuvB(12)-RuvC(2) complex forms which resolves the HJ.

Its subcellular location is the cytoplasm. The catalysed reaction is ATP + H2O = ADP + phosphate + H(+). In terms of biological role, the RuvA-RuvB-RuvC complex processes Holliday junction (HJ) DNA during genetic recombination and DNA repair, while the RuvA-RuvB complex plays an important role in the rescue of blocked DNA replication forks via replication fork reversal (RFR). RuvA specifically binds to HJ cruciform DNA, conferring on it an open structure. The RuvB hexamer acts as an ATP-dependent pump, pulling dsDNA into and through the RuvAB complex. RuvB forms 2 homohexamers on either side of HJ DNA bound by 1 or 2 RuvA tetramers; 4 subunits per hexamer contact DNA at a time. Coordinated motions by a converter formed by DNA-disengaged RuvB subunits stimulates ATP hydrolysis and nucleotide exchange. Immobilization of the converter enables RuvB to convert the ATP-contained energy into a lever motion, pulling 2 nucleotides of DNA out of the RuvA tetramer per ATP hydrolyzed, thus driving DNA branch migration. The RuvB motors rotate together with the DNA substrate, which together with the progressing nucleotide cycle form the mechanistic basis for DNA recombination by continuous HJ branch migration. Branch migration allows RuvC to scan DNA until it finds its consensus sequence, where it cleaves and resolves cruciform DNA. The chain is Holliday junction branch migration complex subunit RuvB from Shewanella oneidensis (strain ATCC 700550 / JCM 31522 / CIP 106686 / LMG 19005 / NCIMB 14063 / MR-1).